The primary structure comprises 168 residues: Calcium-binding protein 2 (168 aa).

4 consecutive EF-hand domains span residues 13-48 (GMEKDLESLFKKYDSDRNGKITYIEIVETLRKAGKK), 48-83 (KNPERIADLLFRDDTDKNGELTIEEAKLRIVRMNDE), 88-123 (VLNWDVEKFINDNDKDGDRKITRDEVLQRFTEQGAE), and 124-159 (DPELITDSIFRQMDLDRDGVITCDEIKEFNRKKKFS). Ca(2+)-binding residues include aspartate 26, aspartate 28, asparagine 30, lysine 32, glutamate 37, aspartate 61, aspartate 63, asparagine 65, glutamate 67, glutamate 72, aspartate 101, aspartate 103, aspartate 105, lysine 107, glutamate 112, aspartate 137, aspartate 139, aspartate 141, and glutamate 148.

In terms of biological role, not known; probably binds four calcium ions. This is Calcium-binding protein 2 (cbp2) from Dictyostelium discoideum (Social amoeba).